The chain runs to 341 residues: Putative UPF0607 protein ENSP00000383144 (341 aa).

Disordered regions lie at residues 70-131 (RLPK…NPRP) and 218-279 (LMVG…PPAK). A compositionally biased stretch (basic and acidic residues) spans 72-101 (PKTEVRAEEPKEATEVKDQVETQEQEDNKR). Polar residues predominate over residues 108-127 (EAASTSRPLETQGNLTSSWY). Over residues 243–252 (AGHRSHKRKL) the composition is skewed to basic residues.

Belongs to the UPF0607 family.

The sequence is that of Putative UPF0607 protein ENSP00000383144 from Homo sapiens (Human).